Consider the following 316-residue polypeptide: tRNA dimethylallyltransferase (316 aa).

17-24 (GPTASGKT) is an ATP binding site. 19-24 (TASGKT) contributes to the substrate binding site. 4 interaction with substrate tRNA regions span residues 42-45 (DSVL), 166-170 (QRLSR), 247-252 (RCVGYR), and 280-287 (KRQITWLR).

The protein belongs to the IPP transferase family. As to quaternary structure, monomer. Requires Mg(2+) as cofactor.

The catalysed reaction is adenosine(37) in tRNA + dimethylallyl diphosphate = N(6)-dimethylallyladenosine(37) in tRNA + diphosphate. Functionally, catalyzes the transfer of a dimethylallyl group onto the adenine at position 37 in tRNAs that read codons beginning with uridine, leading to the formation of N6-(dimethylallyl)adenosine (i(6)A). The protein is tRNA dimethylallyltransferase of Shigella flexneri.